Reading from the N-terminus, the 409-residue chain is Elongation factor Tu, chloroplastic (409 aa).

A tr-type G domain is found at 10–214 (KPHVNIGTIG…AVDTYIPTPE (205 aa)). Residues 19–26 (GHVDHGKT) are G1. 19–26 (GHVDHGKT) contacts GTP. A Mg(2+)-binding site is contributed by Thr-26. The tract at residues 60–64 (GITIN) is G2. A G3 region spans residues 81 to 84 (DCPG). GTP is bound by residues 81 to 85 (DCPGH) and 136 to 139 (NKED). Residues 136 to 139 (NKED) are G4. The G5 stretch occupies residues 174–176 (SAL).

This sequence belongs to the TRAFAC class translation factor GTPase superfamily. Classic translation factor GTPase family. EF-Tu/EF-1A subfamily.

The protein resides in the plastid. It localises to the chloroplast. It carries out the reaction GTP + H2O = GDP + phosphate + H(+). GTP hydrolase that promotes the GTP-dependent binding of aminoacyl-tRNA to the A-site of ribosomes during protein biosynthesis. The protein is Elongation factor Tu, chloroplastic (tufA) of Porphyra purpurea (Red seaweed).